Reading from the N-terminus, the 421-residue chain is Imidazolonepropionase (421 aa).

His-81 and His-83 together coordinate Fe(3+). The Zn(2+) site is built by His-81 and His-83. Positions 90, 153, and 186 each coordinate 4-imidazolone-5-propanoate. Residue Tyr-153 participates in N-formimidoyl-L-glutamate binding. Fe(3+) is bound at residue His-251. Zn(2+) is bound at residue His-251. Glu-254 serves as a coordination point for 4-imidazolone-5-propanoate. Position 326 (Asp-326) interacts with Fe(3+). Asp-326 lines the Zn(2+) pocket. 2 residues coordinate N-formimidoyl-L-glutamate: Asn-328 and Gly-330. Ser-331 contacts 4-imidazolone-5-propanoate.

Belongs to the metallo-dependent hydrolases superfamily. HutI family. It depends on Zn(2+) as a cofactor. The cofactor is Fe(3+).

It localises to the cytoplasm. The catalysed reaction is 4-imidazolone-5-propanoate + H2O = N-formimidoyl-L-glutamate. It participates in amino-acid degradation; L-histidine degradation into L-glutamate; N-formimidoyl-L-glutamate from L-histidine: step 3/3. Catalyzes the hydrolytic cleavage of the carbon-nitrogen bond in imidazolone-5-propanoate to yield N-formimidoyl-L-glutamate. It is the third step in the universal histidine degradation pathway. The protein is Imidazolonepropionase of Streptococcus pyogenes serotype M12 (strain MGAS2096).